The primary structure comprises 518 residues: Arrestin-related trafficking adapter 10 (518 aa).

Residue Lys-118 forms a Glycyl lysine isopeptide (Lys-Gly) (interchain with G-Cter in ubiquitin) linkage.

The protein belongs to the ART10 family. In terms of assembly, interacts with RSP5. Post-translationally, ubiquitinated by RSP5.

Its subcellular location is the cytoplasm. May regulate endocytosis by recruiting RSP5 ubiquitin ligase activity to specific plasma membrane proteins in response to extracellular stimuli. The sequence is that of Arrestin-related trafficking adapter 10 (ART10) from Saccharomyces cerevisiae (strain Lalvin EC1118 / Prise de mousse) (Baker's yeast).